The sequence spans 291 residues: 3-hydroxy-5-phosphonooxypentane-2,4-dione thiolase (291 aa).

The active-site Schiff-base intermediate with substrate is the Lys203.

It belongs to the DeoC/FbaB aldolase family. In terms of assembly, homodecamer.

It is found in the cytoplasm. It catalyses the reaction dihydroxyacetone phosphate + acetyl-CoA = 3-hydroxy-2,4-dioxopentyl phosphate + CoA. Its function is as follows. Involved in the degradation of phospho-AI-2, thereby terminating induction of the lsr operon and closing the AI-2 signaling cycle. Catalyzes the transfer of an acetyl moiety from 3-hydroxy-5-phosphonooxypentane-2,4-dione to CoA to form glycerone phosphate and acetyl-CoA. This chain is 3-hydroxy-5-phosphonooxypentane-2,4-dione thiolase, found in Escherichia coli (strain K12 / DH10B).